The chain runs to 337 residues: MGRVKMSETFSYWIEDNIYPKKWDIIYKQRENQVFLIKINKGSSEYIIVSERFNETMSNSFEIIKIERIQNKSLWRNFDESRKRLNEKYQVSNLDFLESTLFHGTRANDPKLIFSSKVGFDIGKSSFGNYGIGLYFALNASYSNNYSFEESPTSGCKQMFLCRVLLGNSAPPTQKELKNDSTQDSIKGPGGEMFILKSNHTAYPDYLISYRQKVIVNNNTNNNNKNKNKNNNKNNNKNIKIQNENKNENKIENKNENENQFDNYGFNTNFSQNLYDKYGLKYPSQEKPKPGFFTPNKELEYEIFPLLFEKNEKEEELEELEDYQLALLLSTSSLGSK.

A PARP catalytic domain is found at 21 to 231; it reads KKWDIIYKQR…NNNKNKNKNN (211 aa). Positions 218–242 are enriched in low complexity; sequence NNTNNNNKNKNKNNNKNNNKNIKIQ. A disordered region spans residues 218 to 247; the sequence is NNTNNNNKNKNKNNNKNNNKNIKIQNENKN.

The catalysed reaction is L-aspartyl-[protein] + NAD(+) = 4-O-(ADP-D-ribosyl)-L-aspartyl-[protein] + nicotinamide. It carries out the reaction L-glutamyl-[protein] + NAD(+) = 5-O-(ADP-D-ribosyl)-L-glutamyl-[protein] + nicotinamide. The enzyme catalyses NAD(+) + (ADP-D-ribosyl)n-acceptor = nicotinamide + (ADP-D-ribosyl)n+1-acceptor + H(+).. The polypeptide is Probable poly [ADP-ribose] polymerase DDB_G0278045 (Dictyostelium discoideum (Social amoeba)).